Here is a 418-residue protein sequence, read N- to C-terminus: Argininosuccinate synthase (418 aa).

Residues 14-22 (AYSGGLDTS) and Ala42 contribute to the ATP site. Positions 94 and 99 each coordinate L-citrulline. Position 124 (Gly124) interacts with ATP. Residues Thr126, Asn130, and Asp131 each contribute to the L-aspartate site. Asn130 contacts L-citrulline. L-citrulline contacts are provided by Arg134, Ser183, Ser192, Glu273, and Tyr285.

This sequence belongs to the argininosuccinate synthase family. Type 1 subfamily. In terms of assembly, homotetramer.

It is found in the cytoplasm. The catalysed reaction is L-citrulline + L-aspartate + ATP = 2-(N(omega)-L-arginino)succinate + AMP + diphosphate + H(+). Its pathway is amino-acid biosynthesis; L-arginine biosynthesis; L-arginine from L-ornithine and carbamoyl phosphate: step 2/3. This is Argininosuccinate synthase from Colwellia psychrerythraea (strain 34H / ATCC BAA-681) (Vibrio psychroerythus).